Reading from the N-terminus, the 527-residue chain is Cytochrome P450 monooxygenase aba2 (527 aa).

A helical transmembrane segment spans residues 26 to 46; the sequence is TTVAVLVTVALIAQVLWKIFF. 3 N-linked (GlcNAc...) asparagine glycosylation sites follow: N189, N420, and N448. C460 is a heme binding site. N464 carries an N-linked (GlcNAc...) asparagine glycan.

The protein belongs to the cytochrome P450 family. Heme is required as a cofactor.

It is found in the membrane. Its pathway is hormone biosynthesis. Functionally, cytochrome P450 monooxygenase; part of the gene cluster that mediates the biosynthesis of abscisic acid (ABA), a phytohormone that acts antagonistically toward salicylic acid (SA), jasmonic acid (JA) and ethylene (ETH) signaling, to impede plant defense responses. The first step of the pathway catalyzes the reaction from farnesyl diphosphate to alpha-ionylideneethane performed by the alpha-ionylideneethane synthase aba3 via a three-step reaction mechanism involving 2 neutral intermediates, beta-farnesene and allofarnesene. The cytochrome P450 monooxygenase aba1 might then be involved in the conversion of alpha-ionylideneethane to alpha-ionylideneacetic acid. Alpha-ionylideneacetic acid is further converted to abscisic acid in 2 steps involving the cytochrome P450 monooxygenase aba2 and the short-chain dehydrogenase/reductase aba4, via the intermediates 1'-deoxy-ABA or 1',4'-trans-diol-ABA, depending on the order of action of these 2 enzymes. Aba2 is responsible for the hydroxylation of carbon atom C-1' and aba4 might be involved in the oxidation of the C-4' carbon atom. In Botryotinia fuckeliana (strain B05.10) (Noble rot fungus), this protein is Cytochrome P450 monooxygenase aba2 (aba2).